Consider the following 628-residue polypeptide: Probable potassium transport system protein Kup (628 aa).

12 helical membrane passes run 20-40, 63-83, 110-130, 151-171, 178-198, 212-232, 256-276, 296-316, 346-366, 375-395, 398-418, and 422-442; these read ALLT…SPLY, IISM…VMLV, FVAV…VITP, FILP…PLGT, FGPI…PQII, ALGL…AVVL, WFCV…ALVI, IPLV…VISG, IYMP…VLVF, AYGL…LIYV, TWWK…LLFA, and TKIH…IVVM.

This sequence belongs to the HAK/KUP transporter (TC 2.A.72) family.

The protein localises to the cell membrane. The enzyme catalyses K(+)(in) + H(+)(in) = K(+)(out) + H(+)(out). In terms of biological role, transport of potassium into the cell. Likely operates as a K(+):H(+) symporter. This Corynebacterium glutamicum (strain R) protein is Probable potassium transport system protein Kup.